The chain runs to 726 residues: WD repeat-containing and planar cell polarity effector protein fritz homolog (726 aa).

WD repeat units lie at residues 305 to 343 and 344 to 383; these read LRSK…TLLA and QAEL…INIQ. The segment covering 642–660 has biased composition (polar residues); sequence SSGSTPKHTIQQKIPNGPS. Residues 642–717 form a disordered region; it reads SSGSTPKHTI…RRQDTEDVGS (76 aa). The segment covering 672–685 has biased composition (acidic residues); it reads MEETEEEEEEEEEA. Residues 701-712 are compositionally biased toward basic and acidic residues; the sequence is GELREDHRRQDT.

The protein belongs to the WD repeat fritz family. As to quaternary structure, component of the CPLANE (ciliogenesis and planar polarity effectors) complex, composed of INTU, FUZ and WDPCP. Interacts with CPLANE1.

Its subcellular location is the cell membrane. The protein localises to the cytoplasm. It is found in the cytoskeleton. It localises to the cilium axoneme. The protein resides in the cilium basal body. In terms of biological role, probable effector of the planar cell polarity signaling pathway which regulates the septin cytoskeleton in both ciliogenesis and collective cell movements. Together with FUZ and WDPCP proposed to function as core component of the CPLANE (ciliogenesis and planar polarity effectors) complex involved in the recruitment of peripheral IFT-A proteins to basal bodies. Binds phosphatidylinositol 3-phosphate with highest affinity, followed by phosphatidylinositol 4-phosphate and phosphatidylinositol 5-phosphate. The protein is WD repeat-containing and planar cell polarity effector protein fritz homolog (Wdpcp) of Rattus norvegicus (Rat).